Here is a 171-residue protein sequence, read N- to C-terminus: Photosystem I assembly protein Ycf3 (171 aa).

TPR repeat units follow at residues 33 to 66, 70 to 103, and 118 to 151; these read AFSY…EEDP, SYIL…NSRL, and GTKS…APNN.

This sequence belongs to the Ycf3 family.

It is found in the plastid. The protein resides in the chloroplast thylakoid membrane. Essential for the assembly of the photosystem I (PSI) complex. May act as a chaperone-like factor to guide the assembly of the PSI subunits. In Emiliania huxleyi (Coccolithophore), this protein is Photosystem I assembly protein Ycf3.